A 115-amino-acid polypeptide reads, in one-letter code: NADH-ubiquinone oxidoreductase chain 3 (115 aa).

3 helical membrane passes run 4–24 (LMALLVNITLSTLLIIVAFWL), 55–75 (FFLVAITFLLFDLEIALLLPL), and 84–104 (INIMMLTAFILVSVLALGLAY).

It belongs to the complex I subunit 3 family. Core subunit of respiratory chain NADH dehydrogenase (Complex I) which is composed of 45 different subunits. Interacts with TMEM186. Interacts with TMEM242.

It localises to the mitochondrion inner membrane. The enzyme catalyses a ubiquinone + NADH + 5 H(+)(in) = a ubiquinol + NAD(+) + 4 H(+)(out). In terms of biological role, core subunit of the mitochondrial membrane respiratory chain NADH dehydrogenase (Complex I) which catalyzes electron transfer from NADH through the respiratory chain, using ubiquinone as an electron acceptor. Essential for the catalytic activity of complex I. This Peromyscus melanotis (Black-eared mouse) protein is NADH-ubiquinone oxidoreductase chain 3.